A 53-amino-acid chain; its full sequence is UPF0391 membrane protein PA5482 (53 aa).

Helical transmembrane passes span 4–24 (WAIT…GGIA) and 29–49 (GIAK…FFFG).

The protein belongs to the UPF0391 family.

It localises to the cell membrane. In Pseudomonas aeruginosa (strain ATCC 15692 / DSM 22644 / CIP 104116 / JCM 14847 / LMG 12228 / 1C / PRS 101 / PAO1), this protein is UPF0391 membrane protein PA5482.